A 688-amino-acid chain; its full sequence is Probable glucan endo-1,3-beta-glucosidase btgC (688 aa).

3 disordered regions span residues 1 to 49, 61 to 91, and 169 to 194; these read MSGP…MNGQ, DGRQ…NLGP, and QLTP…DIPY. The Cytoplasmic portion of the chain corresponds to 1 to 307; sequence MSGPNRTYSF…PKPGGGNKKR (307 aa). The segment covering 175–188 has biased composition (polar residues); sequence SVSHLSSTNPSQRN. The chain crosses the membrane as a helical; Signal-anchor for type II membrane protein span at residues 308–328; it reads GWIVGAILAFIIIGAIVGGAV. At 329 to 688 the chain is on the extracellular side; that stretch reads GGTIGHRGNE…IPDCGGKTAT (360 aa). The disordered stretch occupies residues 334 to 363; sequence HRGNEEPSSASSASSSSTQTATEDTSVNGD. Low complexity predominate over residues 341–355; sequence SSASSASSSSTQTAT. N-linked (GlcNAc...) asparagine glycosylation is found at N408, N431, and N459. E491 serves as the catalytic Proton donor. E590 serves as the catalytic Nucleophile. 2 N-linked (GlcNAc...) asparagine glycosylation sites follow: N609 and N635.

Belongs to the glycosyl hydrolase 17 family.

It localises to the cell membrane. The enzyme catalyses Hydrolysis of (1-&gt;3)-beta-D-glucosidic linkages in (1-&gt;3)-beta-D-glucans.. Glucanases play a role in cell expansion during growth, in cell-cell fusion during mating, and in spore release during sporulation. This enzyme may be involved in beta-glucan degradation. Active on laminarin and lichenan. This chain is Probable glucan endo-1,3-beta-glucosidase btgC (btgC), found in Aspergillus fumigatus (strain CBS 144.89 / FGSC A1163 / CEA10) (Neosartorya fumigata).